A 193-amino-acid chain; its full sequence is Bcl-2-like protein 2 (193 aa).

Ala-2 is modified (N-acetylalanine). The BH4 motif lies at 9–29 (DTRALVADFVGYKLRQKGYVC). A BH1 motif is present at residues 85–104 (ELFQGGPNWGRLVAFFVFGA). Positions 136-151 (DWIHSSGGWAEFTALY) match the BH2 motif. Phosphoserine is present on Ala-177.

It belongs to the Bcl-2 family. As to quaternary structure, interacts with HIF3A (via C-terminus domain). Interacts with BOP. Expressed (at protein level) in a wide range of tissues with highest levels in brain, spinal cord, testis, pancreas, heart, spleen and mammary glands. Moderate levels found in thymus, ovary and small intestine. Not detected in salivary gland, muscle or liver. Also expressed in cell lines of myeloid, fibroblast and epithelial origin. Not detected in most lymphoid cell lines.

The protein resides in the mitochondrion membrane. Its function is as follows. Promotes cell survival. Blocks dexamethasone-induced apoptosis. Mediates survival of postmitotic Sertoli cells by suppressing death-promoting activity of BAX. This is Bcl-2-like protein 2 (BCL2L2) from Homo sapiens (Human).